Here is a 176-residue protein sequence, read N- to C-terminus: RNA pyrophosphohydrolase (176 aa).

A Nudix hydrolase domain is found at 6–149 (GYRPNVGIVI…KRDVYRRVMK (144 aa)). The Nudix box motif lies at 38-59 (GGINPGESPEQAMYRELYEEVG).

Belongs to the Nudix hydrolase family. RppH subfamily. A divalent metal cation is required as a cofactor.

Accelerates the degradation of transcripts by removing pyrophosphate from the 5'-end of triphosphorylated RNA, leading to a more labile monophosphorylated state that can stimulate subsequent ribonuclease cleavage. The polypeptide is RNA pyrophosphohydrolase (Photorhabdus laumondii subsp. laumondii (strain DSM 15139 / CIP 105565 / TT01) (Photorhabdus luminescens subsp. laumondii)).